The primary structure comprises 612 residues: Protein cereblon (612 aa).

Residues Met1–Asp11 are compositionally biased toward acidic residues. Disordered stretches follow at residues Met1–Ala30, Met58–Pro133, and Gln181–Val211. Residues Ala69–Ser81 are compositionally biased toward low complexity. Over residues Gln181–Glu190 the composition is skewed to basic and acidic residues. The region spanning His250–Ser478 is the Lon N-terminal domain. Residues Glu477–Lys586 enclose the CULT domain. Positions 482, 485, 551, and 554 each coordinate Zn(2+).

The protein belongs to the CRBN family. In terms of assembly, likely a component of a DCX (DDB1-CUL4-X-box) protein ligase complex. May interact with pic/DDB1. In terms of processing, ubiquitinated.

It is found in the nucleus. It functions in the pathway protein modification; protein ubiquitination. In terms of biological role, substrate recognition component of a DCX (DDB1-CUL4-X-box) E3 protein ligase complex that mediates the ubiquitination and subsequent proteasomal degradation of target proteins. Has an essential role in mediating growth by negatively regulating insulin signaling. It also has a role in maintaining presynaptic function in the neuromuscular junction synapses of third-instar larvae. This Drosophila willistoni (Fruit fly) protein is Protein cereblon.